The sequence spans 302 residues: Methionyl-tRNA formyltransferase (302 aa).

Residue 107 to 110 (SDLP) coordinates (6S)-5,6,7,8-tetrahydrofolate.

This sequence belongs to the Fmt family.

The enzyme catalyses L-methionyl-tRNA(fMet) + (6R)-10-formyltetrahydrofolate = N-formyl-L-methionyl-tRNA(fMet) + (6S)-5,6,7,8-tetrahydrofolate + H(+). Attaches a formyl group to the free amino group of methionyl-tRNA(fMet). The formyl group appears to play a dual role in the initiator identity of N-formylmethionyl-tRNA by promoting its recognition by IF2 and preventing the misappropriation of this tRNA by the elongation apparatus. The chain is Methionyl-tRNA formyltransferase from Rickettsia massiliae (strain Mtu5).